The following is a 199-amino-acid chain: LPICPSGAVNCQVSLRDLFDRAVILSHYIHNLSSEMFNEFDKRYAQGRGFMTKAINSCHTSSLSTPEDKEQAQQIHHEDLLNLVLRVLRSWNDPLYHLVTEVRGMQEAPDAILSRAIEIEEQNKRLLEGMEKIVGQVHPGVKENEIYSVWSGLPSLQMADEDTRLFAFYNLLHCLRRDSHKIDNYLKLLKCRIIYDSNC.

The cysteines at positions 4 and 11 are disulfide-linked. Residue S26 is modified to Phosphoserine. N31 carries an N-linked (GlcNAc...) asparagine; partial glycan. Phosphoserine occurs at positions 34 and 90. 2 disulfides stabilise this stretch: C58-C174 and C191-C199.

This sequence belongs to the somatotropin/prolactin family. As to quaternary structure, interacts with PRLR.

The protein resides in the secreted. Functionally, prolactin acts primarily on the mammary gland by promoting lactation. This is Prolactin (PRL) from Camelus dromedarius (Dromedary).